We begin with the raw amino-acid sequence, 320 residues long: Homoserine kinase (320 aa).

Residue 100–110 coordinates ATP; that stretch reads PLSSGMGSSAA.

It belongs to the GHMP kinase family. Homoserine kinase subfamily.

It is found in the cytoplasm. The catalysed reaction is L-homoserine + ATP = O-phospho-L-homoserine + ADP + H(+). It functions in the pathway amino-acid biosynthesis; L-threonine biosynthesis; L-threonine from L-aspartate: step 4/5. Functionally, catalyzes the ATP-dependent phosphorylation of L-homoserine to L-homoserine phosphate. The chain is Homoserine kinase from Chlorobium phaeobacteroides (strain BS1).